We begin with the raw amino-acid sequence, 210 residues long: Large ribosomal subunit protein uL4 (210 aa).

This sequence belongs to the universal ribosomal protein uL4 family. As to quaternary structure, part of the 50S ribosomal subunit.

Functionally, one of the primary rRNA binding proteins, this protein initially binds near the 5'-end of the 23S rRNA. It is important during the early stages of 50S assembly. It makes multiple contacts with different domains of the 23S rRNA in the assembled 50S subunit and ribosome. Its function is as follows. Forms part of the polypeptide exit tunnel. This Orientia tsutsugamushi (strain Boryong) (Rickettsia tsutsugamushi) protein is Large ribosomal subunit protein uL4.